A 277-amino-acid chain; its full sequence is Putative phosphoenolpyruvate synthase regulatory protein (277 aa).

ADP is bound at residue 157 to 164 (GVSRCGKT).

Belongs to the pyruvate, phosphate/water dikinase regulatory protein family. PSRP subfamily.

The catalysed reaction is [pyruvate, water dikinase] + ADP = [pyruvate, water dikinase]-phosphate + AMP + H(+). It carries out the reaction [pyruvate, water dikinase]-phosphate + phosphate + H(+) = [pyruvate, water dikinase] + diphosphate. In terms of biological role, bifunctional serine/threonine kinase and phosphorylase involved in the regulation of the phosphoenolpyruvate synthase (PEPS) by catalyzing its phosphorylation/dephosphorylation. The sequence is that of Putative phosphoenolpyruvate synthase regulatory protein from Erwinia tasmaniensis (strain DSM 17950 / CFBP 7177 / CIP 109463 / NCPPB 4357 / Et1/99).